We begin with the raw amino-acid sequence, 270 residues long: Pre-mRNA-splicing factor CWC23 (270 aa).

One can recognise a J domain in the interval 12 to 84; sequence DLYRILHIHV…EHKKEYDIWY (73 aa).

Belongs to the DnaJ family. In terms of assembly, associated with the spliceosome.

The protein localises to the cytoplasm. It localises to the nucleus. Its function is as follows. Involved in pre-mRNA splicing. May be involved in endoplasmic reticulum-associated protein degradation (ERAD) and required for growth at low and high temperatures. The protein is Pre-mRNA-splicing factor CWC23 (CWC23) of Kluyveromyces lactis (strain ATCC 8585 / CBS 2359 / DSM 70799 / NBRC 1267 / NRRL Y-1140 / WM37) (Yeast).